A 122-amino-acid chain; its full sequence is Large ribosomal subunit protein uL14c (122 aa).

This sequence belongs to the universal ribosomal protein uL14 family. As to quaternary structure, part of the 50S ribosomal subunit.

Its subcellular location is the plastid. It is found in the chloroplast. Its function is as follows. Binds to 23S rRNA. The protein is Large ribosomal subunit protein uL14c of Jasminum nudiflorum (Winter jasmine).